A 216-amino-acid polypeptide reads, in one-letter code: Acyl-homoserine-lactone synthase (216 aa).

It belongs to the autoinducer synthase family.

It carries out the reaction a fatty acyl-[ACP] + S-adenosyl-L-methionine = an N-acyl-L-homoserine lactone + S-methyl-5'-thioadenosine + holo-[ACP] + H(+). Functionally, required for the synthesis of OHHL (N-(3-oxohexanoyl)-L-homoserine lactone), an autoinducer molecule which binds to a yet uncharacterized transcriptional regulator. In Enterobacter agglomerans (Erwinia herbicola), this protein is Acyl-homoserine-lactone synthase (eagI).